The primary structure comprises 942 residues: Small RNA 2'-O-methyltransferase (942 aa).

The DRBM domain occupies 19-87 (FGAKASYTVE…AELALDKLGI (69 aa)). The 112-residue stretch at 93-204 (DLTVDEARDE…KNAYPSEIVE (112 aa)) folds into the HTH La-type RNA-binding domain. Residues 505 to 514 (EQSCDTDDDQ) are compositionally biased toward acidic residues. Disordered stretches follow at residues 505–542 (EQSCDTDDDQDTKSSSPNVFAAPPILQKEHSSESKNTN) and 571–596 (PEYSSDGESPREDNESNEEMESEYSA). S-adenosyl-L-methionine contacts are provided by residues Ser726, Asp745, 778–779 (SI), and Leu795. 3 residues coordinate Mg(2+): Glu796, Glu799, and His800. Residues 837–856 (RSTPETQEENNSEPQLPKFR) are disordered. His860 contacts Mg(2+).

The protein belongs to the methyltransferase superfamily. HEN1 family. Binds small RNA duplexes as monomer. Mg(2+) is required as a cofactor. As to expression, expressed in stems, leaves and inflorescences.

The protein localises to the nucleus. The catalysed reaction is small RNA 3'-end nucleotide + S-adenosyl-L-methionine = small RNA 3'-end 2'-O-methylnucleotide + S-adenosyl-L-homocysteine + H(+). In terms of biological role, methyltransferase that adds a methyl group to the ribose of the last nucleotide of small RNAs (sRNAs). This protects the 3'-end of sRNAs from uridylation activity and subsequent degradation. Can methylate 3'-end of microRNAs (miRNAs), small interfering RNAs (siRNas) and trans-acting small interfering RNAs (ta-siRNAs). Involved in plant development through its role in small RNAs processing. Required for the specification of reproductive organ identities and the probable repression of A class genes. May control floral determinacy possibly by regulating the expression of the C class floral homeotic gene AGAMOUS (AG). In Arabidopsis thaliana (Mouse-ear cress), this protein is Small RNA 2'-O-methyltransferase (HEN1).